The primary structure comprises 552 residues: Non-structural protein NS1 (552 aa).

Belongs to the orbivirus non-structural protein NS1 family.

The polypeptide is Non-structural protein NS1 (Segment-5) (Antilocapra americana (Pronghorn)).